Consider the following 641-residue polypeptide: NADH-ubiquinone oxidoreductase chain 5 (641 aa).

Helical transmembrane passes span 1–21, 33–53, 59–79, 83–103, 121–141, 175–195, 211–231, 243–263, 276–296, 303–322, 367–387, 405–425, 453–473, 476–496, 512–532, 564–584, and 621–641; these read MYLT…VIGR, SLSI…IVLL, ITIY…WAFY, ISIT…LYSI, LFTF…MFVG, VGDL…GSSD, ITIV…QLGL, TPVS…YLIL, LICV…TGLF, VIAY…LGLS, ILPF…ALPF, FLVT…ITAF, PLIM…IGYI, KHLS…VGTL, FGVQ…ALIV, WFDN…GGIF, and IPHY…SIFI.

It belongs to the complex I subunit 5 family.

It localises to the mitochondrion inner membrane. It carries out the reaction a ubiquinone + NADH + 5 H(+)(in) = a ubiquinol + NAD(+) + 4 H(+)(out). In terms of biological role, core subunit of the mitochondrial membrane respiratory chain NADH dehydrogenase (Complex I) that is believed to belong to the minimal assembly required for catalysis. Complex I functions in the transfer of electrons from NADH to the respiratory chain. The immediate electron acceptor for the enzyme is believed to be ubiquinone. This is NADH-ubiquinone oxidoreductase chain 5 (ND5) from Allomyces macrogynus.